We begin with the raw amino-acid sequence, 185 residues long: Ribosome-recycling factor (185 aa).

The protein belongs to the RRF family.

The protein resides in the cytoplasm. Responsible for the release of ribosomes from messenger RNA at the termination of protein biosynthesis. May increase the efficiency of translation by recycling ribosomes from one round of translation to another. The polypeptide is Ribosome-recycling factor (Geobacter sulfurreducens (strain ATCC 51573 / DSM 12127 / PCA)).